Consider the following 220-residue polypeptide: Histone H1B (220 aa).

Disordered regions lie at residues 1-45 (MTAT…PSAS) and 99-220 (QVKG…APKK). Over residues 28–45 (KKVAGGAKAKKPSGPSAS) the composition is skewed to low complexity. The H15 domain maps to 40 to 113 (SGPSASELIV…GASGSFKLNK (74 aa)). Basic residues-rich tracts occupy residues 122-134 (AAKK…KAKK), 141-151 (KAPKSPKKPKK), 158-196 (SPKK…KPKT), and 204-220 (KVAK…APKK).

This sequence belongs to the histone H1/H5 family.

The protein localises to the nucleus. It localises to the chromosome. Its function is as follows. Histones H1 are necessary for the condensation of nucleosome chains into higher-order structures. The polypeptide is Histone H1B (Xenopus laevis (African clawed frog)).